A 211-amino-acid polypeptide reads, in one-letter code: Tudor-interacting repair regulator protein (211 aa).

Glycyl lysine isopeptide (Lys-Gly) (interchain with G-Cter in ubiquitin) cross-links involve residues K10 and K151. Positions 118-205 (TLEQLHAVEI…TEKQKKALEK (88 aa)) are interaction with PXN.

It belongs to the Nudix hydrolase family. TIRR subfamily. As to quaternary structure, homodimer. Interacts with TP53BP1 (via the Tudor-like domain); interaction is abolished following DNA damage and TP53BP1 phosphorylation by ATM. Interacts (via the cytoplasmic part) with SDC4. Interacts with TGFB1I1 and PXN.

Its subcellular location is the nucleus. Key regulator of TP53BP1 required to stabilize TP53BP1 and regulate its recruitment to chromatin. In absence of DNA damage, interacts with the tandem Tudor-like domain of TP53BP1, masking the region that binds histone H4 dimethylated at 'Lys-20' (H4K20me2), thereby preventing TP53BP1 recruitment to chromatin and maintaining TP53BP1 localization to the nucleus. Following DNA damage, ATM-induced phosphorylation of TP53BP1 and subsequent recruitment of RIF1 leads to dissociate NUDT16L1/TIRR from TP53BP1, unmasking the tandem Tudor-like domain and allowing recruitment of TP53BP1 to DNA double strand breaks (DSBs). Binds U8 snoRNA. The sequence is that of Tudor-interacting repair regulator protein from Homo sapiens (Human).